The primary structure comprises 200 residues: MSEALNDLAAYVKEARGSLVVSADIAYGELTLNTTPENVIALLTFLRDDVQCGFVNIIDICGVDWPQREKRFDVVYHLLSPRQNLRVRIKLQVAEDEGVPSSTPVYMGAEWFEREAWDMYGIPFEGHKDLRRILTDYGFEGHPLRKDFPVTGFVEVRYDDVLKRVLYEPVELKQEFRNFDFLSPWEGTEYVLPGDEKAKQ.

Belongs to the complex I 30 kDa subunit family. NDH-1 is composed of 14 different subunits. Subunits NuoB, C, D, E, F, and G constitute the peripheral sector of the complex.

Its subcellular location is the cell inner membrane. The enzyme catalyses a quinone + NADH + 5 H(+)(in) = a quinol + NAD(+) + 4 H(+)(out). In terms of biological role, NDH-1 shuttles electrons from NADH, via FMN and iron-sulfur (Fe-S) centers, to quinones in the respiratory chain. The immediate electron acceptor for the enzyme in this species is believed to be ubiquinone. Couples the redox reaction to proton translocation (for every two electrons transferred, four hydrogen ions are translocated across the cytoplasmic membrane), and thus conserves the redox energy in a proton gradient. The protein is NADH-quinone oxidoreductase subunit C of Agrobacterium fabrum (strain C58 / ATCC 33970) (Agrobacterium tumefaciens (strain C58)).